Consider the following 143-residue polypeptide: 18.1 kDa class I heat shock protein (143 aa).

One can recognise a sHSP domain in the interval glutamate 29–serine 143.

Belongs to the small heat shock protein (HSP20) family. As to quaternary structure, forms oligomeric structures.

The protein localises to the cytoplasm. The sequence is that of 18.1 kDa class I heat shock protein (HSP18.1) from Medicago sativa (Alfalfa).